The sequence spans 435 residues: Probable tRNA pseudouridine synthase D (435 aa).

Catalysis depends on Asp95, which acts as the Nucleophile. A TRUD domain is found at 170–396; the sequence is GVPNYFGTQR…SSGTRRAVLV (227 aa).

Belongs to the pseudouridine synthase TruD family.

The catalysed reaction is uridine(13) in tRNA = pseudouridine(13) in tRNA. Its function is as follows. Could be responsible for synthesis of pseudouridine from uracil-13 in transfer RNAs. This is Probable tRNA pseudouridine synthase D from Natronomonas pharaonis (strain ATCC 35678 / DSM 2160 / CIP 103997 / JCM 8858 / NBRC 14720 / NCIMB 2260 / Gabara) (Halobacterium pharaonis).